Reading from the N-terminus, the 288-residue chain is Acetyl-coenzyme A carboxylase carboxyl transferase subunit beta (288 aa).

The region spanning 34–288 is the CoA carboxyltransferase N-terminal domain; sequence LFAKCPACKH…HLVAFHGGVS (255 aa). Residues Cys38, Cys41, Cys56, and Cys59 each coordinate Zn(2+). The segment at 38–59 adopts a C4-type zinc-finger fold; it reads CPACKHMIYQKDLGPAKICPTC.

It belongs to the AccD/PCCB family. Acetyl-CoA carboxylase is a heterohexamer composed of biotin carboxyl carrier protein (AccB), biotin carboxylase (AccC) and two subunits each of ACCase subunit alpha (AccA) and ACCase subunit beta (AccD). It depends on Zn(2+) as a cofactor.

It localises to the cytoplasm. The enzyme catalyses N(6)-carboxybiotinyl-L-lysyl-[protein] + acetyl-CoA = N(6)-biotinyl-L-lysyl-[protein] + malonyl-CoA. The protein operates within lipid metabolism; malonyl-CoA biosynthesis; malonyl-CoA from acetyl-CoA: step 1/1. Its function is as follows. Component of the acetyl coenzyme A carboxylase (ACC) complex. Biotin carboxylase (BC) catalyzes the carboxylation of biotin on its carrier protein (BCCP) and then the CO(2) group is transferred by the transcarboxylase to acetyl-CoA to form malonyl-CoA. The protein is Acetyl-coenzyme A carboxylase carboxyl transferase subunit beta of Streptococcus equi subsp. equi (strain 4047).